The chain runs to 179 residues: Large ribosomal subunit protein uL5 (179 aa).

This sequence belongs to the universal ribosomal protein uL5 family. Part of the 50S ribosomal subunit; part of the 5S rRNA/L5/L18/L25 subcomplex. Contacts the 5S rRNA and the P site tRNA. Forms a bridge to the 30S subunit in the 70S ribosome.

Functionally, this is one of the proteins that bind and probably mediate the attachment of the 5S RNA into the large ribosomal subunit, where it forms part of the central protuberance. In the 70S ribosome it contacts protein S13 of the 30S subunit (bridge B1b), connecting the 2 subunits; this bridge is implicated in subunit movement. Contacts the P site tRNA; the 5S rRNA and some of its associated proteins might help stabilize positioning of ribosome-bound tRNAs. This is Large ribosomal subunit protein uL5 from Aeromonas salmonicida (strain A449).